The sequence spans 356 residues: UDP-N-acetylglucosamine--N-acetylmuramyl-(pentapeptide) pyrophosphoryl-undecaprenol N-acetylglucosamine transferase (356 aa).

UDP-N-acetyl-alpha-D-glucosamine contacts are provided by residues 10–12 (TAG), N123, R159, S193, I240, and Q284.

Belongs to the glycosyltransferase 28 family. MurG subfamily.

Its subcellular location is the cell membrane. It catalyses the reaction di-trans,octa-cis-undecaprenyl diphospho-N-acetyl-alpha-D-muramoyl-L-alanyl-D-glutamyl-meso-2,6-diaminopimeloyl-D-alanyl-D-alanine + UDP-N-acetyl-alpha-D-glucosamine = di-trans,octa-cis-undecaprenyl diphospho-[N-acetyl-alpha-D-glucosaminyl-(1-&gt;4)]-N-acetyl-alpha-D-muramoyl-L-alanyl-D-glutamyl-meso-2,6-diaminopimeloyl-D-alanyl-D-alanine + UDP + H(+). The protein operates within cell wall biogenesis; peptidoglycan biosynthesis. Cell wall formation. Catalyzes the transfer of a GlcNAc subunit on undecaprenyl-pyrophosphoryl-MurNAc-pentapeptide (lipid intermediate I) to form undecaprenyl-pyrophosphoryl-MurNAc-(pentapeptide)GlcNAc (lipid intermediate II). This chain is UDP-N-acetylglucosamine--N-acetylmuramyl-(pentapeptide) pyrophosphoryl-undecaprenol N-acetylglucosamine transferase, found in Corynebacterium glutamicum (strain ATCC 13032 / DSM 20300 / JCM 1318 / BCRC 11384 / CCUG 27702 / LMG 3730 / NBRC 12168 / NCIMB 10025 / NRRL B-2784 / 534).